Consider the following 486-residue polypeptide: MTTIRLTNTKTRRKEAFTPIDPANVRLYVCGPTVYDRAHLGNGRPVVVFDVLFRLLRHVYGPDHVTYVRNFTDVDDKINAAAQARKAAGDPRSLEELIRARTDETIRWYHEDMDALGALRPTHEPRATEWIGAMIAMIEDLVARGHAYEREGHVLFRVRSYRDYGALSGRSVDDMIAGARVEVAPFKEDPMDFVLWKPSDDELPGWESPWGRGRPGWHIECSAMSYELLGASFDIHAGGIDLQFPHHENEIAQSCCAHPEGGFANVWMHNEMLLVNGKKMSKSLGNFFTIHDLRKDRGIPGEVIRMVLLGTHYSKPMDWTAEKAAQAKATLWKWRKLTADVEPAASPDAAVLAALADDLNTPAAITRLHSIAAQEDGALLKASASLLGLLEDDLRGWTLPPVTGTGSGVMEVSGSATAIVGSVQYRETIERLLDERKQARMGKDFKRSDAIRDLLVGAGVIIKDTPAGAEWDLGADFDPARLGEPE.

C30 provides a ligand contact to Zn(2+). Residues 32-42 (PTVYDRAHLGN) carry the 'HIGH' region motif. Zn(2+) contacts are provided by C221, H246, and E250. Positions 279 to 283 (KMSKS) match the 'KMSKS' region motif. Residue K282 participates in ATP binding.

It belongs to the class-I aminoacyl-tRNA synthetase family. As to quaternary structure, monomer. Requires Zn(2+) as cofactor.

Its subcellular location is the cytoplasm. The catalysed reaction is tRNA(Cys) + L-cysteine + ATP = L-cysteinyl-tRNA(Cys) + AMP + diphosphate. This chain is Cysteine--tRNA ligase, found in Cereibacter sphaeroides (strain ATCC 17025 / ATH 2.4.3) (Rhodobacter sphaeroides).